The sequence spans 314 residues: Aspartate carbamoyltransferase catalytic subunit (314 aa).

2 residues coordinate carbamoyl phosphate: arginine 63 and threonine 64. Residue lysine 91 participates in L-aspartate binding. Carbamoyl phosphate is bound by residues arginine 113, histidine 143, and glutamine 146. Residues arginine 176 and arginine 228 each coordinate L-aspartate. Alanine 269 and proline 270 together coordinate carbamoyl phosphate.

Belongs to the aspartate/ornithine carbamoyltransferase superfamily. ATCase family. Heterododecamer (2C3:3R2) of six catalytic PyrB chains organized as two trimers (C3), and six regulatory PyrI chains organized as three dimers (R2).

It catalyses the reaction carbamoyl phosphate + L-aspartate = N-carbamoyl-L-aspartate + phosphate + H(+). It participates in pyrimidine metabolism; UMP biosynthesis via de novo pathway; (S)-dihydroorotate from bicarbonate: step 2/3. Functionally, catalyzes the condensation of carbamoyl phosphate and aspartate to form carbamoyl aspartate and inorganic phosphate, the committed step in the de novo pyrimidine nucleotide biosynthesis pathway. This chain is Aspartate carbamoyltransferase catalytic subunit, found in Cutibacterium acnes (strain DSM 16379 / KPA171202) (Propionibacterium acnes).